The chain runs to 738 residues: MDAFKLLTRATKLKTGATPSSAQSSTRLPSTGKAENPQLFRNSEAEKVLEQAQQGKKRKRTAAAEARDADDDAAELNFFGARKAAVSSTPTSKEEKQEQERSGEDDASDEEVEFMDEVQRRTVLNAHKIKVTDLRDLEEIQPVRVASEEPKKKKKKRKQQEEEESKVPLTKKEQKKARRLYPEPLVSFKELRSKYKISSRLAENIAEQGFTVPTEVQLGTLPLLLGGFESKAGESVEPDLLVVAPTGSGKTLSFLIPVINKIVRHHHDQSQEQERGIFSIIVAPTKELASQIVNEGRKLVHGTGVKIALMKKGMRVVEREDEDDDGDDSSSEDGDESSESEHEERPIAKKSKGKAPVTKSDILVTTPLQLVNALSTNQTKPMATLPLVRNIVLDEADVLLDPLFRDQTLNIWRACTHPELRASLWSATMGSNVEDLAKSTIKERKEAVNQTKSYPLLRLVVGLKDSAIPNIEHKLIYAATEQGKLLGLRQLLHPTAASASDVRLRPPFLIFTQTIPRAVALHSELRYDIPTEAGGSSRIAVLHSDLSDGQRSEIMKNFRKGEIWILVTTDLLARGVDFRGINGVVNYDIPNSAAVYVHRVGRTGRAGREGGIAVTYYTKEDIPYVKSIANIIDVSEKLRGKTGEKSIQKWLLDALPDLSKKDKKELKKHGVKARQSNLKSDKDDKEHRKTRISTKSGFERRIENKKKALIAANRNRKSQAQSAADGDSGNESWDGLEN.

Disordered regions lie at residues 1–112 and 145–176; these read MDAF…DEEV and VASEEPKKKKKKRKQQEEEESKVPLTKKEQKK. A compositionally biased stretch (polar residues) spans 17–29; sequence ATPSSAQSSTRLP. Over residues 92-104 the composition is skewed to basic and acidic residues; that stretch reads SKEEKQEQERSGE. Positions 190–218 match the Q motif motif; it reads ELRSKYKISSRLAENIAEQGFTVPTEVQL. The Helicase ATP-binding domain maps to 231–447; sequence KAGESVEPDL…KSTIKERKEA (217 aa). Residue 244–251 participates in ATP binding; it reads APTGSGKT. The disordered stretch occupies residues 316-356; sequence VVEREDEDDDGDDSSSEDGDESSESEHEERPIAKKSKGKAP. Over residues 319–338 the composition is skewed to acidic residues; sequence REDEDDDGDDSSSEDGDESS. A DEAD box motif is present at residues 394 to 397; that stretch reads DEAD. In terms of domain architecture, Helicase C-terminal spans 487–655; that stretch reads GLRQLLHPTA…SIQKWLLDAL (169 aa). The segment at 663–738 is disordered; that stretch reads KKELKKHGVK…GNESWDGLEN (76 aa). The segment covering 697–706 has biased composition (basic and acidic residues); the sequence is GFERRIENKK.

This sequence belongs to the DEAD box helicase family. DDX52/ROK1 subfamily. As to quaternary structure, interacts with the U3 snoRNA and is associated with the 90S and 40S pre-ribosomes.

Its subcellular location is the nucleus. The protein resides in the nucleolus. It carries out the reaction ATP + H2O = ADP + phosphate + H(+). ATP-dependent RNA helicase involved in 40S ribosomal subunit biogenesis. Required for the processing and cleavage of 35S pre-rRNA at sites A0, A1, and A2, leading to mature 18S rRNA. The polypeptide is ATP-dependent RNA helicase rok1 (rok1) (Aspergillus clavatus (strain ATCC 1007 / CBS 513.65 / DSM 816 / NCTC 3887 / NRRL 1 / QM 1276 / 107)).